A 396-amino-acid polypeptide reads, in one-letter code: MISKLFGRGKFFRNVALQVRFNSSEAVEFRPLHSSLISRAELYVNELRELEDLLSQGGSFDLEKQKNFAKLSTIVDSYSKYREEVNQYKELQEILELDPSLREEAEADIAALLPDLNKTGDSLLNKLLPPHPFADKPSILELRPGVGGSEAMIFTQDLLNMYINYANYHKWKWNLISKTENASGSGVLEAILNIDEPGSYDKLKFEAGVHRVQRVPATESKGRTHTSTAAVIVLPKMGEESESDAYERTFKPDEIRIDVMRASGKGGQHVNTTDSAVRLTHYPSGIVISMQEERSQHRNKAKAFAILRARLAEKERLEKEEKERNARKDQVSTTDRSDKIRTYNYPQNRITDHRCGFTLYDIEGVMKGERLDDVIDAMDAFSSEQKAKQLLQDMSA.

The residue at position 268 (Gln268) is an N5-methylglutamine. The disordered stretch occupies residues 317 to 340 (LEKEEKERNARKDQVSTTDRSDKI).

This sequence belongs to the prokaryotic/mitochondrial release factor family. In terms of processing, methylation of glutamine in the GGQ triplet is conserved from bacteria to mammals.

It localises to the mitochondrion. In terms of biological role, mitochondrial peptide chain release factor that directs the termination of translation in response to the peptide chain termination codons UAA and UAG. This chain is Peptide chain release factor 1, mitochondrial (MRF1), found in Kluyveromyces lactis (strain ATCC 8585 / CBS 2359 / DSM 70799 / NBRC 1267 / NRRL Y-1140 / WM37) (Yeast).